The chain runs to 251 residues: Triosephosphate isomerase (251 aa).

9–11 (NWK) contributes to the substrate binding site. His95 acts as the Electrophile in catalysis. Glu167 (proton acceptor) is an active-site residue. Residues Gly173, Ser212, and 233–234 (GG) each bind substrate.

This sequence belongs to the triosephosphate isomerase family. As to quaternary structure, homodimer.

The protein localises to the cytoplasm. The enzyme catalyses D-glyceraldehyde 3-phosphate = dihydroxyacetone phosphate. The protein operates within carbohydrate biosynthesis; gluconeogenesis. Its pathway is carbohydrate degradation; glycolysis; D-glyceraldehyde 3-phosphate from glycerone phosphate: step 1/1. Functionally, involved in the gluconeogenesis. Catalyzes stereospecifically the conversion of dihydroxyacetone phosphate (DHAP) to D-glyceraldehyde-3-phosphate (G3P). This chain is Triosephosphate isomerase, found in Pseudomonas savastanoi pv. phaseolicola (strain 1448A / Race 6) (Pseudomonas syringae pv. phaseolicola (strain 1448A / Race 6)).